The sequence spans 428 residues: 3-phosphoshikimate 1-carboxyvinyltransferase (428 aa).

The 3-phosphoshikimate site is built by lysine 20, serine 21, and arginine 25. Residue lysine 20 participates in phosphoenolpyruvate binding. Phosphoenolpyruvate is bound by residues glycine 92 and arginine 120. 3-phosphoshikimate contacts are provided by serine 166, glutamine 168, aspartate 314, and lysine 341. Glutamine 168 is a phosphoenolpyruvate binding site. The active-site Proton acceptor is the aspartate 314. Residues arginine 345 and arginine 387 each contribute to the phosphoenolpyruvate site.

Belongs to the EPSP synthase family. Monomer.

It is found in the cytoplasm. The catalysed reaction is 3-phosphoshikimate + phosphoenolpyruvate = 5-O-(1-carboxyvinyl)-3-phosphoshikimate + phosphate. Its pathway is metabolic intermediate biosynthesis; chorismate biosynthesis; chorismate from D-erythrose 4-phosphate and phosphoenolpyruvate: step 6/7. In terms of biological role, catalyzes the transfer of the enolpyruvyl moiety of phosphoenolpyruvate (PEP) to the 5-hydroxyl of shikimate-3-phosphate (S3P) to produce enolpyruvyl shikimate-3-phosphate and inorganic phosphate. In Listeria welshimeri serovar 6b (strain ATCC 35897 / DSM 20650 / CCUG 15529 / CIP 8149 / NCTC 11857 / SLCC 5334 / V8), this protein is 3-phosphoshikimate 1-carboxyvinyltransferase.